The primary structure comprises 291 residues: MSALNWKPFVYGGLASITAECGTFPIDLTKTRLQIQGQTNDANFREIRYRGMLHALMRIGREEGLKALYSGIAPAMLRQASYGTIKIGTYQSLKRLAVERPEDETLLVNVVCGILSGVISSAIANPTDVLKIRMQAQNSAVQGGMIDSFMSIYQQEGTRGLWKGVSLTAQRAAIVVGVELPVYDITKKHLILSGLMGDTVATHFLSSFTCGLVGALASNPVDVVRTRMMNQRALRDGRCAGYKGTLDCLLQTWKNEGFFALYKGFWPNWLRLGPWNIIFFLTYEQLKKLDL.

The residue at position 2 (serine 2) is an N-acetylserine. 3 Solcar repeats span residues 7-96, 104-189, and 198-289; these read KPFV…LKRL, ETLL…TKKH, and DTVA…LKKL. 6 helical membrane passes run 9 to 26, 71 to 89, 106 to 124, 164 to 183, 204 to 224, and 264 to 283; these read FVYG…TFPI, GIAP…KIGT, LLVN…SAIA, GVSL…LPVY, FLSS…VDVV, and GFWP…FLTY.

It belongs to the mitochondrial carrier (TC 2.A.29) family. Interacts with VDAC1. In terms of tissue distribution, present in kidney (at protein level). Expressed predominantly within the kidney cortex in the proximal and distal tubules and at lower levels in the testis and white adipose tissue.

It localises to the mitochondrion inner membrane. The enzyme catalyses sulfite(in) + sulfate(out) = sulfite(out) + sulfate(in). It carries out the reaction thiosulfate(in) + sulfate(out) = thiosulfate(out) + sulfate(in). The catalysed reaction is sulfate(out) + phosphate(in) = sulfate(in) + phosphate(out). It catalyses the reaction oxalate(in) + sulfate(out) = oxalate(out) + sulfate(in). The enzyme catalyses malonate(in) + sulfate(out) = malonate(out) + sulfate(in). It carries out the reaction maleate(in) + sulfate(out) = maleate(out) + sulfate(in). The catalysed reaction is (S)-malate(in) + sulfate(out) = (S)-malate(out) + sulfate(in). It catalyses the reaction (3S)-citramalate(in) + sulfate(out) = (3S)-citramalate(out) + sulfate(in). The enzyme catalyses (3R)-citramalate(in) + sulfate(out) = (3R)-citramalate(out) + sulfate(in). It carries out the reaction sulfate(out) + succinate(in) = sulfate(in) + succinate(out). The catalysed reaction is (S,S)-tartrate(in) + sulfate(out) = (S,S)-tartrate(out) + sulfate(in). It catalyses the reaction (2R,3R)-tartrate(in) + sulfate(out) = (2R,3R)-tartrate(out) + sulfate(in). The enzyme catalyses D-aspartate(in) + sulfate(out) = D-aspartate(out) + sulfate(in). It carries out the reaction L-aspartate(in) + sulfate(out) = L-aspartate(out) + sulfate(in). The catalysed reaction is sulfate(in) = sulfate(out). It catalyses the reaction phosphate(in) = phosphate(out). The enzyme catalyses (S)-malate(out) = (S)-malate(in). Functionally, antiporter that transports inorganic anions (sulfate, sulfite, thiosulfate and phosphate) and, to a lesser extent, a variety of dicarboxylates (e.g. malonate, malate and citramalate) and, even more so, aspartate. The sulfate/sulfate exchange is much higher than the phosphate/phosphate and malate/malate exchanges. The transport affinities is higher for sulfate and thiosulfate than for any other substrate. May catalyze the export of sulfite and thiosulfate (the hydrogen sulfide degradation products) from the mitochondria, thereby modulating the level of the hydrogen sulfide. Also may mediate a very low unidirectional transport of sulfate, phosphate and (S)-malate. This Mus musculus (Mouse) protein is Kidney mitochondrial carrier protein 1.